Here is a 395-residue protein sequence, read N- to C-terminus: Chorismate synthase (395 aa).

Position 48 (Arg48) interacts with NADP(+). 125–127 (RSS) serves as a coordination point for FMN. Residues 264 to 292 (RNEDWTFDDGESFDHVESEEGDPVPVGND) are disordered. Residues Gly298, 313 to 317 (HAPTS), and Arg340 each bind FMN. The segment at 373–395 (PDRVDGNPGQYDTDYHPSSPDND) is disordered.

Belongs to the chorismate synthase family. It depends on FMNH2 as a cofactor.

It catalyses the reaction 5-O-(1-carboxyvinyl)-3-phosphoshikimate = chorismate + phosphate. It functions in the pathway metabolic intermediate biosynthesis; chorismate biosynthesis; chorismate from D-erythrose 4-phosphate and phosphoenolpyruvate: step 7/7. Functionally, catalyzes the anti-1,4-elimination of the C-3 phosphate and the C-6 proR hydrogen from 5-enolpyruvylshikimate-3-phosphate (EPSP) to yield chorismate, which is the branch point compound that serves as the starting substrate for the three terminal pathways of aromatic amino acid biosynthesis. This reaction introduces a second double bond into the aromatic ring system. This is Chorismate synthase from Halorubrum lacusprofundi (strain ATCC 49239 / DSM 5036 / JCM 8891 / ACAM 34).